A 1466-amino-acid chain; its full sequence is ABC transporter G family member 10 (1466 aa).

Residues 23–45 are compositionally biased toward low complexity; the sequence is NTPQYENNNNNNNNTSGNESPNI. Residues 23 to 47 form a disordered region; the sequence is NTPQYENNNNNNNNTSGNESPNILN. The ABC transporter 1 domain maps to 138-392; sequence VTIFNLFRPS…FLDLGFDCEP (255 aa). One can recognise an ABC transmembrane type-2 1 domain in the interval 497–724; the sequence is WGDRFALISK…NGSTMSYQDQ (228 aa). Transmembrane regions (helical) follow at residues 501-521, 537-557, 586-606, 611-631, 641-661, and 767-787; these read FALISKYISIIVQTFVYASLF, AIYAAILFNAFVSAGELGLTF, IPLTAIQVTIFSVIVYFMYGL, GKFFIFLFTIFGSTLSMVAFF, LYVSQNILNVFILFMFTYGGY, and IITFLWWIFFVIINMIALELF. One can recognise an ABC transporter 2 domain in the interval 838–1082; the sequence is FTWNHIHYTV…LTSYFERNGV (245 aa). An ATP-binding site is contributed by 874–881; it reads GSSGAGKT. One can recognise an ABC transmembrane type-2 2 domain in the interval 1177 to 1399; sequence SYVYGIFTQA…LTCKEYFKPT (223 aa). The next 6 helical transmembrane spans lie at 1178 to 1198, 1214 to 1234, 1253 to 1273, 1290 to 1310, 1319 to 1339, and 1440 to 1460; these read YVYGIFTQAAASGLIIGFTFW, IFEILFLGILYIFIAIPQFLI, FAISIVIVELPFVAVAGTICF, FYFYITFILFLFICVSLGQVV, LAQTILPLLLVMLFLFCGVLV, and YGILWAFFIFNIIMVVSFVYL.

It belongs to the ABC transporter superfamily. ABCG family. PDR (TC 3.A.1.205) subfamily.

The protein localises to the membrane. In Dictyostelium discoideum (Social amoeba), this protein is ABC transporter G family member 10 (abcG10).